We begin with the raw amino-acid sequence, 448 residues long: Inositol hexakisphosphate kinase 2 (448 aa).

Residues E229–L231 and D242 contribute to the ATP site. Substrate-binding positions include P238–G246, K244, and K258–K265. D405 is an ATP binding site. H408 provides a ligand contact to substrate.

It belongs to the inositol phosphokinase (IPK) family. Highly expressed in brain and lung, and at slightly lower levels in liver, kidney and testis.

It is found in the nucleus. It carries out the reaction 1D-myo-inositol hexakisphosphate + ATP = 5-diphospho-1D-myo-inositol 1,2,3,4,6-pentakisphosphate + ADP. It functions in the pathway phospholipid metabolism; phosphatidylinositol metabolism. In terms of biological role, converts inositol hexakisphosphate (InsP6) to diphosphoinositol pentakisphosphate (InsP7/PP-InsP5). May play a role in the regulation of Na(+)-dependent phosphate cotransport, possibly via its role in diphosphoinositol pentakisphosphate (InsP7/PP-InsP5) biosynthesis. In Mus musculus (Mouse), this protein is Inositol hexakisphosphate kinase 2 (Ip6k2).